A 317-amino-acid chain; its full sequence is 2,3,4,5-tetrahydropyridine-2,6-dicarboxylate N-succinyltransferase (317 aa).

Residues aspartate 166 and glutamate 183 each coordinate Mg(2+). Glutamate 199 acts as the Acyl-anhydride intermediate in catalysis. Succinyl-CoA-binding positions include arginine 201, glycine 216, serine 219, alanine 242, 257–258 (EA), glycine 265, lysine 277, and 290–293 (RRNS).

This sequence belongs to the type 2 tetrahydrodipicolinate N-succinyltransferase family. In terms of assembly, homotrimer.

It is found in the cytoplasm. The catalysed reaction is (S)-2,3,4,5-tetrahydrodipicolinate + succinyl-CoA + H2O = (S)-2-succinylamino-6-oxoheptanedioate + CoA. It participates in amino-acid biosynthesis; L-lysine biosynthesis via DAP pathway; LL-2,6-diaminopimelate from (S)-tetrahydrodipicolinate (succinylase route): step 1/3. In terms of biological role, catalyzes the conversion of the cyclic tetrahydrodipicolinate (THDP) into the acyclic N-succinyl-L-2-amino-6-oxopimelate using succinyl-CoA. In Mycobacterium tuberculosis (strain CDC 1551 / Oshkosh), this protein is 2,3,4,5-tetrahydropyridine-2,6-dicarboxylate N-succinyltransferase (dapD).